The sequence spans 230 residues: Transcription factor bHLH147 (230 aa).

Polar residues predominate over residues 1 to 17; it reads MESISPVSNQLLQPTTT. The tract at residues 1 to 52 is disordered; it reads MESISPVSNQLLQPTTTSSNSDRSRRKRKKKSSPSSVEKSPSPSISLEKWRS. Over residues 33 to 46 the composition is skewed to low complexity; it reads SPSSVEKSPSPSIS. Positions 147–196 constitute a bHLH domain; sequence KQRATVLRLKAKGLPAVQRKVKVLSRLVPGCRKQSLPVVLEETTDYIAAM. The tract at residues 210–230 is disordered; it reads VSSSPPPPTPGHEGGQTHMLG.

Homodimer. Interacts with PRE3.

Its subcellular location is the nucleus. Functionally, atypical bHLH transcription factor probably unable to bind DNA. Negatively regulates brassinosteroid signaling. The protein is Transcription factor bHLH147 (BHLH147) of Arabidopsis thaliana (Mouse-ear cress).